The sequence spans 385 residues: Arginine biosynthesis bifunctional protein ArgJ (385 aa).

Residues Thr142, Lys168, Thr179, Glu259, Asn380, and Thr385 each coordinate substrate. The active-site Nucleophile is Thr179.

It belongs to the ArgJ family. In terms of assembly, heterotetramer of two alpha and two beta chains.

It localises to the cytoplasm. It catalyses the reaction N(2)-acetyl-L-ornithine + L-glutamate = N-acetyl-L-glutamate + L-ornithine. The enzyme catalyses L-glutamate + acetyl-CoA = N-acetyl-L-glutamate + CoA + H(+). Its pathway is amino-acid biosynthesis; L-arginine biosynthesis; L-ornithine and N-acetyl-L-glutamate from L-glutamate and N(2)-acetyl-L-ornithine (cyclic): step 1/1. The protein operates within amino-acid biosynthesis; L-arginine biosynthesis; N(2)-acetyl-L-ornithine from L-glutamate: step 1/4. Its function is as follows. Catalyzes two activities which are involved in the cyclic version of arginine biosynthesis: the synthesis of N-acetylglutamate from glutamate and acetyl-CoA as the acetyl donor, and of ornithine by transacetylation between N(2)-acetylornithine and glutamate. The sequence is that of Arginine biosynthesis bifunctional protein ArgJ from Leptospira interrogans serogroup Icterohaemorrhagiae serovar Lai (strain 56601).